Consider the following 220-residue polypeptide: Large ribosomal subunit protein uL6c (220 aa).

The N-terminal 38 residues, 1-38, are a transit peptide targeting the chloroplast; the sequence is MSLPLPSHMKSVFLGMKVEISTSVPVTRIGFWRKSVDC.

Component of the chloroplast large ribosomal subunit (LSU). Mature 70S chloroplast ribosomes of higher plants consist of a small (30S) and a large (50S) subunit. The 30S small subunit contains 1 molecule of ribosomal RNA (16S rRNA) and 24 different proteins. The 50S large subunit contains 3 rRNA molecules (23S, 5S and 4.5S rRNA) and 33 different proteins.

The protein resides in the plastid. Its subcellular location is the chloroplast. Its function is as follows. Component of the chloroplast ribosome (chloro-ribosome), a dedicated translation machinery responsible for the synthesis of chloroplast genome-encoded proteins, including proteins of the transcription and translation machinery and components of the photosynthetic apparatus. The protein is Large ribosomal subunit protein uL6c (RPL6) of Spinacia oleracea (Spinach).